The following is a 320-amino-acid chain: Mitochondrial glutamate carrier 2 (320 aa).

Solcar repeat units follow at residues 11–97 (LSIT…LRQL), 105–215 (RNLK…LNQL), and 224–313 (ASFT…GIGE). The next 3 membrane-spanning stretches (helical) occupy residues 17 to 37 (LING…IDLA), 66 to 86 (FLGM…EKAI), and 111 to 131 (MLAG…MEML). At S150 the chain carries Phosphoserine. 3 helical membrane passes run 190–210 (GLGA…PLFA), 230–250 (FVAG…LDVL), and 293–313 (ALVI…GIGE).

The protein belongs to the mitochondrial carrier (TC 2.A.29) family.

It is found in the mitochondrion inner membrane. The catalysed reaction is L-glutamate(in) + H(+)(in) = L-glutamate(out) + H(+)(out). Its function is as follows. Responsible for the transport of glutamate from the cytosol into the mitochondrial matrix with the concomitant import of a proton (symport system). This is Mitochondrial glutamate carrier 2 (Slc25a18) from Rattus norvegicus (Rat).